Consider the following 61-residue polypeptide: uncharacterized protein (61 aa).

Positions 1-30 (MDVEVANMAAKLRVRGLKLPNAIVVSTAIL) are cleaved as a signal peptide.

This is an uncharacterized protein from Archaeoglobus fulgidus (strain ATCC 49558 / DSM 4304 / JCM 9628 / NBRC 100126 / VC-16).